The sequence spans 1434 residues: DNA-directed RNA polymerase subunit beta' (1434 aa).

Zn(2+) is bound by residues C70, C72, C85, and C88. 3 residues coordinate Mg(2+): D460, D462, and D464. Residues C840, C915, C922, and C925 each contribute to the Zn(2+) site.

The protein belongs to the RNA polymerase beta' chain family. The RNAP catalytic core consists of 2 alpha, 1 beta, 1 beta' and 1 omega subunit. When a sigma factor is associated with the core the holoenzyme is formed, which can initiate transcription. Requires Mg(2+) as cofactor. It depends on Zn(2+) as a cofactor.

The catalysed reaction is RNA(n) + a ribonucleoside 5'-triphosphate = RNA(n+1) + diphosphate. Its function is as follows. DNA-dependent RNA polymerase catalyzes the transcription of DNA into RNA using the four ribonucleoside triphosphates as substrates. The sequence is that of DNA-directed RNA polymerase subunit beta' from Aeromonas hydrophila subsp. hydrophila (strain ATCC 7966 / DSM 30187 / BCRC 13018 / CCUG 14551 / JCM 1027 / KCTC 2358 / NCIMB 9240 / NCTC 8049).